The following is a 387-amino-acid chain: 3-ketoacyl-CoA thiolase (387 aa).

The Acyl-thioester intermediate role is filled by C91. Catalysis depends on proton acceptor residues H343 and C373.

Belongs to the thiolase-like superfamily. Thiolase family. As to quaternary structure, heterotetramer of two alpha chains (FadB) and two beta chains (FadA).

Its subcellular location is the cytoplasm. It catalyses the reaction an acyl-CoA + acetyl-CoA = a 3-oxoacyl-CoA + CoA. It participates in lipid metabolism; fatty acid beta-oxidation. Functionally, catalyzes the final step of fatty acid oxidation in which acetyl-CoA is released and the CoA ester of a fatty acid two carbons shorter is formed. The protein is 3-ketoacyl-CoA thiolase of Vibrio cholerae serotype O1 (strain ATCC 39315 / El Tor Inaba N16961).